The primary structure comprises 247 residues: Probable transcriptional regulatory protein ETA_14870 (247 aa).

The disordered stretch occupies residues 1-20 (MAGHSKWANTKHRKAAQDAK).

The protein belongs to the TACO1 family.

It is found in the cytoplasm. The sequence is that of Probable transcriptional regulatory protein ETA_14870 from Erwinia tasmaniensis (strain DSM 17950 / CFBP 7177 / CIP 109463 / NCPPB 4357 / Et1/99).